The following is a 246-amino-acid chain: MKKLFVLCVCFFCSITAAGAALPDLKIEKLEEGVFVHTSFEEVNGWGVVTKHGLVVLVNTDAYLIDTPFTATDTEKLVNWFVERGYEIKGTISSHFHSDSTGGIEWLNSQSIPTYASELTNELLKKSGKVQAKYSFSEVSYWLVKNKIEVFYPGPGHTQDNLVVWLPESKILFGGCFIKPHGLGNLGDANLEAWPKSAKILMSKYGKAKLVVSSHSEKGDASLMKRTWEQALKGLKESKKTSSPSN.

A signal peptide spans Met1–Ala20. The Zn(2+) site is built by His95, His97, Asp99, His157, and Cys176. Asp99 is an a beta-lactam binding site. A beta-lactam contacts are provided by Lys179 and Asn185. His215 contributes to the Zn(2+) binding site.

The protein belongs to the metallo-beta-lactamase superfamily. Class-B beta-lactamase family. In terms of assembly, monomer. It depends on Zn(2+) as a cofactor.

The protein localises to the periplasm. The catalysed reaction is a beta-lactam + H2O = a substituted beta-amino acid. Functionally, confers resistance to the different beta-lactam antibiotics (penicillin, cephalosporin and carbapenem) via the hydrolysis of the beta-lactam ring. Exhibits higher catalytic efficiency toward ticarcillin and piperacillin than blaIMP-1. Exhibits catalytic activity for carbapenem compounds, but has a preference for imipenem and ertapenem over meropenem. Has high efficiency for the hydrolysis of cefuroxime. Exhibits hydrolysis of all cephalosporins tested. Exhibits no hydrolysis of temocillin, the 6-alpha-methoxy semisynthetic derivative of ticarcillin. The polypeptide is Metallo-beta-lactamase type 2 (Pseudomonas aeruginosa).